The chain runs to 91 residues: UPF0250 protein PFLU_5418 (91 aa).

The protein belongs to the UPF0250 family.

The protein is UPF0250 protein PFLU_5418 of Pseudomonas fluorescens (strain SBW25).